The following is an 84-amino-acid chain: Large ribosomal subunit protein bL27 (84 aa).

A disordered region spans residues 1–21 (MAHKKAGGSTRNGRDSESKRL).

The protein belongs to the bacterial ribosomal protein bL27 family.

In Baumannia cicadellinicola subsp. Homalodisca coagulata, this protein is Large ribosomal subunit protein bL27.